A 214-amino-acid polypeptide reads, in one-letter code: Large ribosomal subunit protein uL3 (214 aa).

The segment at 129–157 (FGRGPMSHGSKNHRRPGSIGAGTTPGRVF) is disordered.

The protein belongs to the universal ribosomal protein uL3 family. In terms of assembly, part of the 50S ribosomal subunit. Forms a cluster with proteins L14 and L19.

Its function is as follows. One of the primary rRNA binding proteins, it binds directly near the 3'-end of the 23S rRNA, where it nucleates assembly of the 50S subunit. The sequence is that of Large ribosomal subunit protein uL3 from Synechococcus sp. (strain JA-2-3B'a(2-13)) (Cyanobacteria bacterium Yellowstone B-Prime).